Here is a 196-residue protein sequence, read N- to C-terminus: Putative NADH dehydrogenase/NAD(P)H nitroreductase Smal_0358 (196 aa).

This sequence belongs to the nitroreductase family. HadB/RutE subfamily. Requires FMN as cofactor.

The sequence is that of Putative NADH dehydrogenase/NAD(P)H nitroreductase Smal_0358 from Stenotrophomonas maltophilia (strain R551-3).